The chain runs to 488 residues: MELDSENKLLKTGLVIVATLVIAKLIFSFFTSDSKKKRLPPTLKAWPPLVGSLIKFLKGPIIMLREEYPKLGSVFTVNLVHKKITFLIGPEVSAHFFKASESDLSQQEVYQFNVPTFGPGVVFDVDYSVRQEQFRFFTEALRVNKLKGYVDMMVTEAEDYFSKWGESGEVDIKVELERLIILTASRCLLGREVRDQLFDDVSALFHDLDNGMLPISVLFPYLPIPAHRRRDRAREKLSEIFAKIIGSRKRSGKTENDMLQCFIESKYKDGRQTTESEVTGLLIAALFAGQHTSSITSTWTGAYLMRYKEYFSAALDEQKNLIAKHGDKIDHDILSEMDVLYRCIKEALRLHPPLIMLMRASHSDFSVTARDGKTYDIPKGHIVATSPAFANRLPHIFKDPDTYDPERFSPGREEDKAAGAFSYIAFGGGRHGCLGEPFAYLQIKAIWSHLLRNFELELVSPFPEIDWNAMVVGVKGNVMVRYKRRQLS.

The chain crosses the membrane as a helical span at residues 12–32 (TGLVIVATLVIAKLIFSFFTS). A heme-binding site is contributed by C433.

This sequence belongs to the cytochrome P450 family. It depends on heme as a cofactor. As to expression, expressed in leaves, roots, stems, siliques, flowers, flower buds and seedlings.

Its subcellular location is the membrane. It catalyses the reaction a 14alpha-methyl steroid + 3 reduced [NADPH--hemoprotein reductase] + 3 O2 = a Delta(14) steroid + formate + 3 oxidized [NADPH--hemoprotein reductase] + 4 H2O + 4 H(+). Functionally, involved in sterol biosynthesis. Catalyzes the 14-alpha demethylation of obtusifoliol to 4 alpha-methyl-5 alpha-ergosta-8,14,24(28)-trien-3 beta-ol. This chain is Sterol 14-demethylase (CYP51G1), found in Arabidopsis thaliana (Mouse-ear cress).